Consider the following 175-residue polypeptide: Snake venom metalloproteinase BpMP-1 (175 aa).

In terms of domain architecture, Peptidase M12B spans Y1–K175. Ca(2+)-binding residues include E3 and D74. Intrachain disulfides connect C98–C171, C131–C155, and C133–C138. H117 contributes to the Zn(2+) binding site. E118 is an active-site residue. Zn(2+) contacts are provided by H121 and H127. 2 residues coordinate Ca(2+): C171 and N174.

The protein belongs to the venom metalloproteinase (M12B) family. P-I subfamily. As to quaternary structure, monomer. The cofactor is Zn(2+). Expressed by the venom gland.

Its subcellular location is the secreted. With respect to regulation, inhibited by EDTA, 1,10-phenanthroline and beta-mercaptoethanol. Not inhibited by the serine protease inhibitors aprotinin and benzamidin. Non-hemorrhagic snake venom zinc metalloprotease that hydrolyzes the Aalpha-chain of fibrinogen, more slowly the Bbeta-chain and shows no effect on the gamma chain. Has no coagulant activity on bovine plasma and fibrinogen. The protein is Snake venom metalloproteinase BpMP-1 of Bothrops pauloensis (Neuwied's lancehead).